The chain runs to 77 residues: Neurexophilin-4 (77 aa).

Residues 1 to 77 (NCHVEYEKTN…NFQSEHPYFG (77 aa)) are v (Cys-rich).

It belongs to the neurexophilin family. In terms of processing, may be proteolytically processed at the boundary between the N-terminal non-conserved and the central conserved domain in neuron-like cells.

The protein localises to the secreted. In terms of biological role, may be signaling molecules that resemble neuropeptides and that act by binding to alpha-neurexins and possibly other receptors. In Macaca mulatta (Rhesus macaque), this protein is Neurexophilin-4 (NXPH4).